The primary structure comprises 349 residues: Phosphate acyltransferase (349 aa).

The protein belongs to the PlsX family. In terms of assembly, homodimer. Probably interacts with PlsY.

Its subcellular location is the cytoplasm. It catalyses the reaction a fatty acyl-[ACP] + phosphate = an acyl phosphate + holo-[ACP]. Its pathway is lipid metabolism; phospholipid metabolism. Functionally, catalyzes the reversible formation of acyl-phosphate (acyl-PO(4)) from acyl-[acyl-carrier-protein] (acyl-ACP). This enzyme utilizes acyl-ACP as fatty acyl donor, but not acyl-CoA. The sequence is that of Phosphate acyltransferase from Colwellia psychrerythraea (strain 34H / ATCC BAA-681) (Vibrio psychroerythus).